An 820-amino-acid chain; its full sequence is MSDTRRRVKVYTLNEDRQWDDRGTGHVSSTYVERLKGMSLLVRAESDGSLLLESKINPNTAYQKQQDTLIVWSEAENYDLALSFQEKAGCDEIWEKICQVQGKDPSVEVTQDPIDESEEERFEEMPETSNLIDLPTCELGKLEEIADLVTSVLSSPIRREKLALALENEGYIKKLLQLFQTCENLDNTEGLHHLYEIIRGILFLNKAALFEVMFSDECIMDVVGCLEYDPALAQPKRHREFLTKTAKFKEVIPITDSELRQKIHQTYRVQYIQDVILPTPSVFEENFLSTLTSFIFFNKVEIVSMLQEDEKFLSEVFAQLTDEATDDDKRRELVNFFKEFCAFSQTLQPQNRDAFFKTLANLGILPALEIVMGMDDLQVRAAATDIFSYLVEFSPSMVREFVMQEAQQSDDDILLINVVIEQMICDSDPELGGAVQLMGLLRTLIDPENMLATANKTEKSEFLNFFYNHCMHVLTAPLLANTSEDKLEKDAVFGSIKTSTVCPDNYQTAQLLALILELLTFCVEHHTYHIKNYIMNKDLLRRVLILMNSKHTFLALCALRFMRRIIGLKDEFYNRYIIKGNLFDPVINALLDNGTRYNLLNSAIIELFEFIRVEDIKSLTSHIVENFYKALEPIEYVQTFKGLKTRYEQEKDRQSQKLSSVPSILRSNRFRRDARALEDDEELWFNEDDEEEGEAVVPPVEKTKPEDDFPEGYEKFLETKKAKELEDKENLPKRTSVGAFKFTFSHSVSAANGANSTNSKSVAAHTPPATSNGSSSKNTSLTTTVASTKGSLIGLVDYPDDEDEEEEEDASPRKRPRLGS.

The WH1 domain maps to methionine 1 to valine 100. The span at glutamate 682–glutamate 694 shows a compositional bias: acidic residues. Disordered stretches follow at residues glutamate 682–glycine 712 and alanine 750–serine 820. Over residues glutamate 701–glycine 712 the composition is skewed to basic and acidic residues. 2 stretches are compositionally biased toward polar residues: residues alanine 750–serine 761 and proline 768–glycine 790. Residues tyrosine 798–aspartate 809 show a composition bias toward acidic residues.

Belongs to the SMEK family. Serine/threonine-protein phosphatase 4 (PP4) occurs in different assemblies of the catalytic and one or more regulatory subunits.

Functionally, regulatory subunit of serine/threonine-protein phosphatase 4 (PP4). This is Serine/threonine-protein phosphatase 4 regulatory subunit 3-A from Xenopus laevis (African clawed frog).